Here is a 556-residue protein sequence, read N- to C-terminus: Formate--tetrahydrofolate ligase (556 aa).

65 to 72 (TPAGEGKT) contributes to the ATP binding site.

The protein belongs to the formate--tetrahydrofolate ligase family.

The enzyme catalyses (6S)-5,6,7,8-tetrahydrofolate + formate + ATP = (6R)-10-formyltetrahydrofolate + ADP + phosphate. The protein operates within one-carbon metabolism; tetrahydrofolate interconversion. This is Formate--tetrahydrofolate ligase from Alkaliphilus oremlandii (strain OhILAs) (Clostridium oremlandii (strain OhILAs)).